A 481-amino-acid polypeptide reads, in one-letter code: Cobyric acid synthase (481 aa).

Residues 248–435 (NTVIAVPMLP…LHGLFHGGAF (188 aa)) form the GATase cobBQ-type domain. C329 serves as the catalytic Nucleophile. Residue H427 is part of the active site.

Belongs to the CobB/CobQ family. CobQ subfamily.

The protein operates within cofactor biosynthesis; adenosylcobalamin biosynthesis. In terms of biological role, catalyzes amidations at positions B, D, E, and G on adenosylcobyrinic A,C-diamide. NH(2) groups are provided by glutamine, and one molecule of ATP is hydrogenolyzed for each amidation. The polypeptide is Cobyric acid synthase (Granulibacter bethesdensis (strain ATCC BAA-1260 / CGDNIH1)).